The chain runs to 301 residues: MTTKHDVKTFQGFILTLQEYWAQQGCAIVQPLDMEVGAGTFHPMTFLRSLGPEPMSSAYVQPCRRPTDGRYGENPNRLQHYYQFQVVLKPSPSNIQELYLGSLEALGVDMNIHDVRFVEDNWESPTLGAWGLGWEVWLNGMEVSQFTYFQQVGGLECSPVTGEITYGLERLAMYIQEVDSVYDLVWTDGPMGKIMYGDVFHQNEVEQSTYNFEHANVEVLFKQFDDCEKACNELLALETPLPLPAYEQVMKASHAFNLLDARHAISVTERQRYILRVRTMAKSVAESYYQAREALGFPMCK.

This sequence belongs to the class-II aminoacyl-tRNA synthetase family. As to quaternary structure, tetramer of two alpha and two beta subunits.

The protein localises to the cytoplasm. The catalysed reaction is tRNA(Gly) + glycine + ATP = glycyl-tRNA(Gly) + AMP + diphosphate. The chain is Glycine--tRNA ligase alpha subunit from Shewanella loihica (strain ATCC BAA-1088 / PV-4).